We begin with the raw amino-acid sequence, 271 residues long: Carboxy-terminal domain RNA polymerase II polypeptide A small phosphatase 2 (271 aa).

Phosphoserine is present on S5. The FCP1 homology domain occupies 97 to 255 (EDQGRICVVI…LNLIPIFEEL (159 aa)). The 4-aspartylphosphate intermediate role is filled by D107. Mg(2+) is bound by residues D107, D109, and N218. Catalysis depends on D109, which acts as the Proton donor.

In terms of assembly, monomer. Interacts with REST. Mg(2+) serves as cofactor. In terms of tissue distribution, expression is restricted to non-neuronal tissues. Highest expression in pancreas and lowest in liver.

It is found in the nucleus. It catalyses the reaction O-phospho-L-seryl-[protein] + H2O = L-seryl-[protein] + phosphate. The enzyme catalyses O-phospho-L-threonyl-[protein] + H2O = L-threonyl-[protein] + phosphate. Functionally, preferentially catalyzes the dephosphorylation of 'Ser-5' within the tandem 7 residue repeats in the C-terminal domain (CTD) of the largest RNA polymerase II subunit POLR2A. Negatively regulates RNA polymerase II transcription, possibly by controlling the transition from initiation/capping to processive transcript elongation. Recruited by REST to neuronal genes that contain RE-1 elements, leading to neuronal gene silencing in non-neuronal cells. May contribute to the development of sarcomas. This chain is Carboxy-terminal domain RNA polymerase II polypeptide A small phosphatase 2 (CTDSP2), found in Homo sapiens (Human).